The sequence spans 510 residues: Maturase K (510 aa).

Belongs to the intron maturase 2 family. MatK subfamily.

It is found in the plastid. It localises to the chloroplast. Its function is as follows. Usually encoded in the trnK tRNA gene intron. Probably assists in splicing its own and other chloroplast group II introns. This Cestrum elegans (Red cestrum) protein is Maturase K.